We begin with the raw amino-acid sequence, 414 residues long: MAKPSRGRRSPSVSGSSSRSSSRSRSGSSPSRSISRSRSRSRSLSSSSSPSRSVSSGSRSPPRRGKSPAGPARRGRSPPPPPSKGASSPSKKAVQESLVLHVDSLSRNVNEAHLKEIFGNFGEVIHVEIAMDRAVNLPRGHGYVEFKARADAEKAQLYMDGAQIDGKVVKATFTLPPRQKVSSPPKPVSAAPKRDAPKSDNAAADAEKDGGPRRPRETSPQRKTGLSPRRRSPLPRRGLSPRRRSPDSPHRRRPGSPIRRRGDTPPRRRPASPSRGRSPSSPPPRRYRSPPRGSPRRIRGSPVRRRSPLPLRRRSPPPRRLRSPPRRSPIRRRSRSPIRRPGRSRSSSISPRKGRGPAGRRGRSSSYSSSPSPRRIPRKISRSRSPKRPLRGKRSSSNSSSSSSPPPPPPPRKT.

Disordered regions lie at residues 1–95 (MAKP…KAVQ) and 175–414 (LPPR…PRKT). 2 stretches are compositionally biased toward low complexity: residues 10–34 (SPSVSGSSSRSSSRSRSGSSPSRSI) and 42–60 (RSLSSSSSPSRSVSSGSRS). Positions 62–69 (PRRGKSPA) match the Nuclear localization signal 1 motif. S77 carries the phosphoserine modification. The RRM domain maps to 98-176 (LVLHVDSLSR…KVVKATFTLP (79 aa)). Positions 176 to 191 (PPRQKVSSPPKPVSAA) are enriched in low complexity. Residues 205–220 (DAEKDGGPRRPRETSP) show a composition bias toward basic and acidic residues. The segment at 218 to 219 (TS) is required for isoform 1 function in petal development. The span at 228 to 243 (PRRRSPLPRRGLSPRR) shows a compositional bias: basic residues. The Nuclear localization signal 2 signature appears at 229-236 (RRRSPLPR). S256 carries the phosphoserine modification. Short sequence motifs (nuclear localization signal) lie at residues 284–291 (PRRYRSPP), 318–325 (PRRLRSPP), and 338–345 (IRRPGRSR). Composition is skewed to basic residues over residues 285–343 (RRYR…RPGR) and 352–363 (RKGRGPAGRRGR). A compositionally biased stretch (low complexity) spans 364-373 (SSSYSSSPSP). The Nuclear localization signal 6 signature appears at 373–380 (PRRIPRKI). The span at 375 to 394 (RIPRKISRSRSPKRPLRGKR) shows a compositional bias: basic residues. A compositionally biased stretch (pro residues) spans 404–414 (SPPPPPPPRKT).

It belongs to the splicing factor SR family. SR45 subfamily. Component of the spliceosome. Interacts with AFC2, U2AF35A, U2AF35B, RNU1, SCL33 and SKIP. The interaction with AFC2 depends on phosphorylation status. Interaction with RNU1 defines initial 5' splice sites and interaction with U2AF35B 3' splice sites in the early stage of spliceosome assembly. Phosphorylated by AFC2. The phosphorylation status regulates intranuclear distribution. In terms of tissue distribution, especially present in actively growing regions and dividing cells. Mostly expressed in roots (primary and secondary root meristem), shoot apical meristem (SAM), leaf primordia, pollen and inflorescence, and, to a lower extent, in leaves, vascular tissue, hydathode and fruits.

Its subcellular location is the nucleus speckle. The protein localises to the nucleus. It localises to the nucleoplasm. Functionally, involved in 5' and 3' splicing site selection of introns, and may bridge the 5' and 3' components of the spliceosome. Isoform 1 is required during flower petal development and isoform 2 is involved in root growth. Negatively regulates glucose and abscisic acid (ABA) signaling during early seedling development. Involved in the RNA-directed DNA methylation pathway. Modulates KIN10 stability in response to sugars, probably through the splicing regulation of 5PTASE13, a protein implicated in the proteasomal degradation of KIN10. The protein is Serine/arginine-rich splicing factor SR45 of Arabidopsis thaliana (Mouse-ear cress).